The sequence spans 486 residues: UDP-N-acetylmuramoyl-L-alanyl-D-glutamate--2,6-diaminopimelate ligase (486 aa).

UDP-N-acetyl-alpha-D-muramoyl-L-alanyl-D-glutamate is bound at residue S30. Position 111 to 117 (111 to 117) interacts with ATP; sequence GTNGKTT. UDP-N-acetyl-alpha-D-muramoyl-L-alanyl-D-glutamate-binding positions include 153–154, S180, Q186, and R188; that span reads TT. The residue at position 220 (K220) is an N6-carboxylysine. Meso-2,6-diaminopimelate is bound by residues R378, 402–405, G455, and E459; that span reads DNPR. The Meso-diaminopimelate recognition motif signature appears at 402 to 405; that stretch reads DNPR.

It belongs to the MurCDEF family. MurE subfamily. It depends on Mg(2+) as a cofactor. In terms of processing, carboxylation is probably crucial for Mg(2+) binding and, consequently, for the gamma-phosphate positioning of ATP.

Its subcellular location is the cytoplasm. It carries out the reaction UDP-N-acetyl-alpha-D-muramoyl-L-alanyl-D-glutamate + meso-2,6-diaminopimelate + ATP = UDP-N-acetyl-alpha-D-muramoyl-L-alanyl-gamma-D-glutamyl-meso-2,6-diaminopimelate + ADP + phosphate + H(+). It functions in the pathway cell wall biogenesis; peptidoglycan biosynthesis. Its function is as follows. Catalyzes the addition of meso-diaminopimelic acid to the nucleotide precursor UDP-N-acetylmuramoyl-L-alanyl-D-glutamate (UMAG) in the biosynthesis of bacterial cell-wall peptidoglycan. The polypeptide is UDP-N-acetylmuramoyl-L-alanyl-D-glutamate--2,6-diaminopimelate ligase (Parabacteroides distasonis (strain ATCC 8503 / DSM 20701 / CIP 104284 / JCM 5825 / NCTC 11152)).